The following is a 351-amino-acid chain: uncharacterized protein (351 aa).

Positions 1–61 (MNDKRKPSFQ…RDKQEVKETR (61 aa)) are disordered. Basic and acidic residues-rich tracts occupy residues 16 to 38 (FQER…HFND) and 44 to 61 (RNEK…KETR).

This sequence belongs to the class IV-like SAM-binding methyltransferase superfamily. RNA methyltransferase TrmH family.

This is an uncharacterized protein from Haemophilus influenzae (strain ATCC 51907 / DSM 11121 / KW20 / Rd).